A 1401-amino-acid chain; its full sequence is MAP kinase kinase kinase wis4 (1401 aa).

Disordered regions lie at residues 67–99 and 176–205; these read HIPL…MSYT and QDSI…NDFS. 2 stretches are compositionally biased toward polar residues: residues 72–99 and 176–191; these read PSHS…MSYT and QDSI…NQSL. The Protein kinase domain occupies 1037–1306; the sequence is WQQGHFVRSG…AVDLLTHPWI (270 aa). Residues 1043 to 1051 and K1066 contribute to the ATP site; that span reads VRSGMFGDV. The active-site Proton acceptor is D1161.

Belongs to the protein kinase superfamily. STE Ser/Thr protein kinase family. MAP kinase kinase kinase subfamily.

It catalyses the reaction L-seryl-[protein] + ATP = O-phospho-L-seryl-[protein] + ADP + H(+). It carries out the reaction L-threonyl-[protein] + ATP = O-phospho-L-threonyl-[protein] + ADP + H(+). Functionally, involved in a signal transduction pathway that is activated in under conditions of heat shock, oxidative stress or limited nutrition. Unlike win1, it is not activated by changes in the osmolarity of the extracellular environment. Activates the wis1 MAP kinase kinase by phosphorylation. This chain is MAP kinase kinase kinase wis4 (wis4), found in Schizosaccharomyces pombe (strain 972 / ATCC 24843) (Fission yeast).